Consider the following 343-residue polypeptide: Anthranilate phosphoribosyltransferase (343 aa).

5-phospho-alpha-D-ribose 1-diphosphate-binding positions include Gly84, 87–88 (GD), Thr92, 94–97 (NIST), 112–120 (KHGNRGVSS), and Ser124. Residue Gly84 participates in anthranilate binding. Ser96 contacts Mg(2+). Residue Asn115 coordinates anthranilate. An anthranilate-binding site is contributed by Arg170. Residues Asp229 and Glu230 each coordinate Mg(2+).

This sequence belongs to the anthranilate phosphoribosyltransferase family. Homodimer. Mg(2+) serves as cofactor.

It catalyses the reaction N-(5-phospho-beta-D-ribosyl)anthranilate + diphosphate = 5-phospho-alpha-D-ribose 1-diphosphate + anthranilate. Its pathway is amino-acid biosynthesis; L-tryptophan biosynthesis; L-tryptophan from chorismate: step 2/5. Functionally, catalyzes the transfer of the phosphoribosyl group of 5-phosphorylribose-1-pyrophosphate (PRPP) to anthranilate to yield N-(5'-phosphoribosyl)-anthranilate (PRA). This Burkholderia orbicola (strain MC0-3) protein is Anthranilate phosphoribosyltransferase.